The sequence spans 543 residues: Alanine aminotransferase 1, mitochondrial (543 aa).

The N-terminal 55 residues, 1-55 (MRRFVIGQAKNLIDQSRRRQLHHHKNLSFVSLIPPFSAPSDSSSRHLSSSSSSDM), are a transit peptide targeting the mitochondrion. The span at 43-63 (SSRHLSSSSSSDMSASDSSSS) shows a compositional bias: low complexity. Residues 43 to 64 (SSRHLSSSSSSDMSASDSSSSL) form a disordered region. Position 56 is an N-acetylserine (Ser56). Pyridoxal 5'-phosphate is bound by residues Tyr173, 209-210 (AS), Tyr235, Asn291, Tyr322, and 354-356 (SFQ). Lys360 bears the N6-(pyridoxal phosphate)lysine mark. Pyridoxal 5'-phosphate is bound by residues Arg369 and Asn397.

The protein belongs to the class-I pyridoxal-phosphate-dependent aminotransferase family. Alanine aminotransferase subfamily. Homodimer. The cofactor is pyridoxal 5'-phosphate. The N-terminus is blocked. As to expression, mostly expressed in roots and shoots, mostly in vascular tissues, and, to a lower extent, in flowers and leaves.

The protein resides in the mitochondrion. It carries out the reaction L-alanine + 2-oxoglutarate = pyruvate + L-glutamate. It participates in photosynthesis; C4 acid pathway. The protein operates within amino-acid degradation; L-alanine degradation via transaminase pathway; pyruvate from L-alanine: step 1/1. Its function is as follows. Is the major alanine aminotransferase in roots that catalyzes the conversion of alanine to pyruvate. Involved in the rapid conversion of alanine to pyruvate during recovery from low-oxygen stress. In Arabidopsis thaliana (Mouse-ear cress), this protein is Alanine aminotransferase 1, mitochondrial.